A 49-amino-acid chain; its full sequence is Large ribosomal subunit protein bL33 (49 aa).

Belongs to the bacterial ribosomal protein bL33 family.

This chain is Large ribosomal subunit protein bL33, found in Caldanaerobacter subterraneus subsp. tengcongensis (strain DSM 15242 / JCM 11007 / NBRC 100824 / MB4) (Thermoanaerobacter tengcongensis).